Reading from the N-terminus, the 506-residue chain is MSEHFILQPGQLSLVSIKQILDEELSCVLAEHAFELIRASHQTVKKVIDEKKTVYGINTGFGSLANQTISSDCLKELQRNIVLSHACGTGKLLPDSVVALILLLKINNLSQGYSGVRLELINALIALFNHKVYPCIPSKGSVGASGDLVPLAHLSLPLLGEGEVRHQGQVISAEEGLKLAGLKPLELEAKEGLALLNGLQVSTALALSALFISETLFETAIISGSLSVDAASGSDVPFDDRIHQIRGHQAQISAASMYRNLLAGSQIRESHRHCNRVQDPYSLRCQPQIMGAVLHQMQFVGQTLQVEANAISDNPLVFAEQGDILSGGNFHGEIIAMAADNLALALSEIGGSAERRIALLIDKNFSGLPAFLVRESGLNSGFMIAHVTAASCASDNKALAHPHSVDSLPTSANQEDHVSMATSAARRLHEMIDNTSTILAIELLAACQGLEFHKPLKTSPQLDKIYQSVRSVVKEYDKDRYFAPDIEKIKKKILDKEFSLLTLTNE.

A cross-link (5-imidazolinone (Ala-Gly)) is located at residues 144-146 (ASG). Ser145 carries the post-translational modification 2,3-didehydroalanine (Ser).

This sequence belongs to the PAL/histidase family. Post-translationally, contains an active site 4-methylidene-imidazol-5-one (MIO), which is formed autocatalytically by cyclization and dehydration of residues Ala-Ser-Gly.

It localises to the cytoplasm. It catalyses the reaction L-histidine = trans-urocanate + NH4(+). It participates in amino-acid degradation; L-histidine degradation into L-glutamate; N-formimidoyl-L-glutamate from L-histidine: step 1/3. The polypeptide is Histidine ammonia-lyase (Legionella pneumophila (strain Paris)).